Here is a 205-residue protein sequence, read N- to C-terminus: N-(5'-phosphoribosyl)anthranilate isomerase (205 aa).

It belongs to the TrpF family.

It carries out the reaction N-(5-phospho-beta-D-ribosyl)anthranilate = 1-(2-carboxyphenylamino)-1-deoxy-D-ribulose 5-phosphate. The protein operates within amino-acid biosynthesis; L-tryptophan biosynthesis; L-tryptophan from chorismate: step 3/5. This is N-(5'-phosphoribosyl)anthranilate isomerase from Clostridium acetobutylicum (strain ATCC 824 / DSM 792 / JCM 1419 / IAM 19013 / LMG 5710 / NBRC 13948 / NRRL B-527 / VKM B-1787 / 2291 / W).